Here is a 661-residue protein sequence, read N- to C-terminus: Acetyl-coenzyme A synthetase (661 aa).

Residues 199–202 (RGGK) and Thr-317 each bind CoA. ATP-binding positions include 393 to 395 (GEP), 417 to 422 (DTFWQT), Asp-508, and Arg-523. Ser-531 lines the CoA pocket. Arg-534 contacts ATP. CoA is bound at residue Arg-596.

The protein belongs to the ATP-dependent AMP-binding enzyme family.

It carries out the reaction acetate + ATP + CoA = acetyl-CoA + AMP + diphosphate. This chain is Acetyl-coenzyme A synthetase (ACS-1), found in Coprinopsis cinerea (Inky cap fungus).